A 79-amino-acid polypeptide reads, in one-letter code: UPF0337 protein YhjA (79 aa).

Residues 1-30 (MALNDKLDATKDKVSGKVKETTGKVTGDEK) form a disordered region.

This sequence belongs to the UPF0337 (CsbD) family.

The chain is UPF0337 protein YhjA (yhjA) from Lactococcus lactis subsp. lactis (strain IL1403) (Streptococcus lactis).